Reading from the N-terminus, the 59-residue chain is Large ribosomal subunit protein bL32 (59 aa).

The protein belongs to the bacterial ribosomal protein bL32 family.

The protein is Large ribosomal subunit protein bL32 of Synechococcus sp. (strain JA-2-3B'a(2-13)) (Cyanobacteria bacterium Yellowstone B-Prime).